The primary structure comprises 141 residues: uncharacterized protein (141 aa).

The stretch at 24-52 (KVQTALQKEAKTIKREQKKIKDEIDTFKT) forms a coiled coil.

This is an uncharacterized protein from Invertebrate iridescent virus 6 (IIV-6).